The primary structure comprises 375 residues: Succinyl-diaminopimelate desuccinylase (375 aa).

H66 contributes to the Zn(2+) binding site. D68 is a catalytic residue. A Zn(2+)-binding site is contributed by D99. E133 functions as the Proton acceptor in the catalytic mechanism. The Zn(2+) site is built by E134, E162, and H348.

This sequence belongs to the peptidase M20A family. DapE subfamily. As to quaternary structure, homodimer. It depends on Zn(2+) as a cofactor. Co(2+) serves as cofactor.

It catalyses the reaction N-succinyl-(2S,6S)-2,6-diaminopimelate + H2O = (2S,6S)-2,6-diaminopimelate + succinate. It functions in the pathway amino-acid biosynthesis; L-lysine biosynthesis via DAP pathway; LL-2,6-diaminopimelate from (S)-tetrahydrodipicolinate (succinylase route): step 3/3. Functionally, catalyzes the hydrolysis of N-succinyl-L,L-diaminopimelic acid (SDAP), forming succinate and LL-2,6-diaminopimelate (DAP), an intermediate involved in the bacterial biosynthesis of lysine and meso-diaminopimelic acid, an essential component of bacterial cell walls. This Yersinia pseudotuberculosis serotype O:1b (strain IP 31758) protein is Succinyl-diaminopimelate desuccinylase.